We begin with the raw amino-acid sequence, 730 residues long: Dual function macrocyclase-peptidase POPB (730 aa).

Residues serine 577, aspartate 661, and histidine 698 each act as charge relay system in the active site.

The protein belongs to the peptidase S9A family. As to quaternary structure, monomer. As to expression, expressed in the pileus (cap) and lamellae where it colocalizes with amanitin.

It carries out the reaction Hydrolysis of Pro-|-Xaa &gt;&gt; Ala-|-Xaa in oligopeptides.. Dual function macrocyclase-peptidase involved in the biosynthesis of the highly toxic amanitin toxin family of macrocycles. Cleaves peptide bonds on the C-terminal side of prolyl residues. The enzyme first removes 10 residues from the N-terminus of a 35-residue substrate. Conformational trapping of the 25 amino-acid peptide forces the enzyme to release this intermediate rather than proceed to macrocyclization. The enzyme rebinds the 25 amino-acid peptide in a different conformation and catalyzes macrocyclization of the N-terminal eight residues. This Amanita bisporigera (Destroying angel) protein is Dual function macrocyclase-peptidase POPB.